The chain runs to 241 residues: Accessory protein p30II (241 aa).

Short sequence motifs (nuclear localization signal) lie at residues arginine 73–arginine 78 and glycine 91–arginine 98. The disordered stretch occupies residues alanine 86–leucine 153. Low complexity predominate over residues proline 107 to glycine 138. A Mitochondrial targeting signal motif is present at residues leucine 175–arginine 184.

The protein belongs to the HTLV-1 accessory protein p30II family. As to quaternary structure, p30II binds to the KIX domains of CREBBP and EP300.

It localises to the host nucleus. The protein localises to the host nucleolus. Its subcellular location is the host mitochondrion inner membrane. Functionally, p30II is a multifunctional regulator that sequesters EP300/CREBBP and down-regulates CREB-responsive element (CRE) and Tax-responsive element (TRE) mediated transcription. Specifically binds and represses tax/rex mRNA nuclear export. Since Tax and Rex are positive regulators of viral gene expression, their inhibition by p30II reduces virion production, and allows the virus to escape the host immune surveillance and persist latently in an immune-competent host. P13II increases mitochondrial permeability to monovalent cations, producing a rapid, membrane potential-dependent influx of potassium. This could involve a channel-forming activity. Interferes with cell proliferation and transformation and promotes apoptosis induced by ceramide and Fas ligand, probably using the Ras signaling. The sequence is that of Accessory protein p30II from Human T-cell leukemia virus 1 (isolate Caribbea HS-35 subtype A) (HTLV-1).